The sequence spans 416 residues: Probable glucan 1,3-beta-glucosidase A (416 aa).

The N-terminal stretch at 1 to 21 is a signal peptide; the sequence is MLYNLSKAVLALSVLAASADA. E209 functions as the Proton donor in the catalytic mechanism. 2 cysteine pairs are disulfide-bonded: C290-C415 and C316-C341. The Nucleophile role is filled by E308.

It belongs to the glycosyl hydrolase 5 (cellulase A) family. Monomer. Mn(2+) is required as a cofactor.

It is found in the secreted. The catalysed reaction is Successive hydrolysis of beta-D-glucose units from the non-reducing ends of (1-&gt;3)-beta-D-glucans, releasing alpha-glucose.. Functionally, beta-glucanases participate in the metabolism of beta-glucan, the main structural component of the cell wall. It could also function biosynthetically as a transglycosylase. This Aspergillus terreus (strain NIH 2624 / FGSC A1156) protein is Probable glucan 1,3-beta-glucosidase A (exgA).